The primary structure comprises 290 residues: MDIEAYFERIGYKNSRNKLDLETLTDILEHQIRAVPFENLNMHCGQAMELGLEAIFDHIVRRNRGGWCLQVNQLLYWALTTIGFQTTMLGGYFYIPPVNKYSTGMVHLLLQVTIDGRNYIVDAGSGSSSQMWQPLELISGKDQPQVPCIFCLTEERGIWYLDQIRREQYITNKEFLNSHLLPKKKHQKIYLFTLEPRTIEDFESMNTYLQTSPTSSFITTSFCSLQTPEGVYCLVGFILTYRKFNYKDNTDLVEFKTLTEEEVEEVLRNIFKISLGRNLVPKPGDGSLTI.

Cysteine 68 acts as the Acyl-thioester intermediate in catalysis. Threonine 103 and glycine 104 together coordinate CoA. A substrate-binding site is contributed by 106–107 (VH). Catalysis depends on residues histidine 107 and aspartate 122. CoA-binding residues include tyrosine 208, threonine 214, and serine 287.

Belongs to the arylamine N-acetyltransferase family.

It is found in the cytoplasm. The catalysed reaction is an arylamine + acetyl-CoA = an N-acetylarylamine + CoA. It carries out the reaction an N-hydroxyarylamine + acetyl-CoA = an N-acetoxyarylamine + CoA. Its function is as follows. Catalyzes the N- or O-acetylation of various arylamine and heterocyclic amine substrates. Participates in the detoxification of a plethora of hydrazine and arylamine drugs, and is able to bioactivate several known carcinogens. The polypeptide is Arylamine N-acetyltransferase 2 (NAT2) (Homo sapiens (Human)).